A 195-amino-acid polypeptide reads, in one-letter code: E3 ubiquitin-protein ligase ZNRF1 (195 aa).

Positions 1-10 (MGGKQSSASR) are enriched in polar residues. Residues 1–37 (MGGKQSSASRSRAPFPGVSSDDSAVPPSSNFGHFRGG) form a disordered region. Gly-2 is lipidated: N-myristoyl glycine. A compositionally biased stretch (low complexity) spans 18–29 (VSSDDSAVPPSS). The segment at 152–193 (CVICLEELSQGDTIARLPCLCIYHKSCIDSWFEVNRCCPEHP) adopts an RING-type; atypical zinc-finger fold.

Its subcellular location is the endosome. The protein localises to the lysosome. The protein resides in the membrane. It carries out the reaction S-ubiquitinyl-[E2 ubiquitin-conjugating enzyme]-L-cysteine + [acceptor protein]-L-lysine = [E2 ubiquitin-conjugating enzyme]-L-cysteine + N(6)-ubiquitinyl-[acceptor protein]-L-lysine.. The protein operates within protein modification; protein ubiquitination. Functionally, E3 ubiquitin-protein ligase that plays a role in neuron cells differentiation. Plays a role in the establishment and maintenance of neuronal transmission and plasticity. The sequence is that of E3 ubiquitin-protein ligase ZNRF1 (znrf1) from Xenopus laevis (African clawed frog).